The sequence spans 208 residues: LexA repressor (208 aa).

A DNA-binding region (H-T-H motif) is located at residues 30 to 50 (VREICAAVKLSSTSTVHGHLA). Residues Ser-129 and Lys-167 each act as for autocatalytic cleavage activity in the active site.

It belongs to the peptidase S24 family. As to quaternary structure, homodimer.

It carries out the reaction Hydrolysis of Ala-|-Gly bond in repressor LexA.. Functionally, represses a number of genes involved in the response to DNA damage (SOS response), including recA and lexA. In the presence of single-stranded DNA, RecA interacts with LexA causing an autocatalytic cleavage which disrupts the DNA-binding part of LexA, leading to derepression of the SOS regulon and eventually DNA repair. The polypeptide is LexA repressor (Lactobacillus helveticus (strain DPC 4571)).